A 157-amino-acid polypeptide reads, in one-letter code: Phospholipase A2 phaiodactylipin (157 aa).

Positions 34 and 36 each coordinate Ca(2+). Cystine bridges form between cysteine 35–cysteine 56, cysteine 55–cysteine 94, cysteine 62–cysteine 87, cysteine 85–cysteine 127, and cysteine 132–cysteine 143. N-linked (GlcNAc...) asparagine glycosylation is present at asparagine 43. Residue histidine 59 is part of the active site. Aspartate 60 serves as a coordination point for Ca(2+). Aspartate 88 is a catalytic residue. Asparagine 101 is a glycosylation site (N-linked (GlcNAc...) asparagine). The propeptide at 134 to 139 (DEKSAR) is removed in mature form. Asparagine 153 carries an N-linked (GlcNAc...) asparagine glycan.

Belongs to the phospholipase A2 family. Group III subfamily. As to quaternary structure, heterodimer composed of a small subunit and a large subunit; disulfide-linked. The cofactor is Ca(2+). As to expression, expressed by the venom gland.

The protein localises to the secreted. It carries out the reaction a 1,2-diacyl-sn-glycero-3-phosphocholine + H2O = a 1-acyl-sn-glycero-3-phosphocholine + a fatty acid + H(+). Functionally, scorpion venom phospholipase A2 (PLA2) that is lethal to crickets and crustaceae. Causes inflammation in mice and lysis of human erythrocytes. Has a mild anticoagulant effect on human platelets. PLA2 catalyzes the calcium-dependent hydrolysis of the 2-acyl groups in 3-sn-phosphoglycerides. This Anuroctonus phaiodactylus (Mafia scorpion) protein is Phospholipase A2 phaiodactylipin.